A 66-amino-acid chain; its full sequence is Nigrocin-2ISa (66 aa).

The N-terminal stretch at 1–22 is a signal peptide; the sequence is MFTLKKSMLLLFFLGTINLSLC. A propeptide spans 23–43 (removed in mature form); sequence QEERDAEEERRDEDNAKMEEI. An intrachain disulfide couples Cys-60 to Cys-66.

In terms of tissue distribution, expressed by the skin glands.

The protein localises to the secreted. Functionally, has antimicrobial activity against Gram-negative bacterium E.coli ATCC 8739 (MIC=25 ug), against Gram positive bacteria S.aureus ATCC 6538 (MIC=3.1 ug), methicillin-resistant S.aureus ATCC 43300 (MIC=12.5 ug), B.subtilis ATCC 6633 (MIC=12.5 ug) and against fungus C.albicans ATCC 90028 (MIC=50 ug). In Odorrana ishikawae (Ishikawa's frog), this protein is Nigrocin-2ISa.